The chain runs to 504 residues: Cobyric acid synthase (504 aa).

The region spanning 258-454 is the GATase cobBQ-type domain; it reads EIEIAIIKLP…LHGIFENDEW (197 aa). C339 serves as the catalytic Nucleophile. Residue H446 is part of the active site.

The protein belongs to the CobB/CobQ family. CobQ subfamily.

Its pathway is cofactor biosynthesis; adenosylcobalamin biosynthesis. Its function is as follows. Catalyzes amidations at positions B, D, E, and G on adenosylcobyrinic A,C-diamide. NH(2) groups are provided by glutamine, and one molecule of ATP is hydrogenolyzed for each amidation. In Prochlorococcus marinus (strain NATL2A), this protein is Cobyric acid synthase.